The sequence spans 388 residues: Succinate--CoA ligase [ADP-forming] subunit beta (388 aa).

In terms of domain architecture, ATP-grasp spans Lys-9–Arg-244. Residues Lys-46, Gly-53–Gly-55, Glu-99, Thr-102, and Glu-107 each bind ATP. Mg(2+) is bound by residues Asn-199 and Asp-213. Residues Asn-264 and Gly-321 to Val-323 contribute to the substrate site.

Belongs to the succinate/malate CoA ligase beta subunit family. As to quaternary structure, heterotetramer of two alpha and two beta subunits. Mg(2+) is required as a cofactor.

The catalysed reaction is succinate + ATP + CoA = succinyl-CoA + ADP + phosphate. It catalyses the reaction GTP + succinate + CoA = succinyl-CoA + GDP + phosphate. Its pathway is carbohydrate metabolism; tricarboxylic acid cycle; succinate from succinyl-CoA (ligase route): step 1/1. Succinyl-CoA synthetase functions in the citric acid cycle (TCA), coupling the hydrolysis of succinyl-CoA to the synthesis of either ATP or GTP and thus represents the only step of substrate-level phosphorylation in the TCA. The beta subunit provides nucleotide specificity of the enzyme and binds the substrate succinate, while the binding sites for coenzyme A and phosphate are found in the alpha subunit. This chain is Succinate--CoA ligase [ADP-forming] subunit beta, found in Serratia proteamaculans (strain 568).